The following is a 378-amino-acid chain: Circumsporozoite protein (378 aa).

The first 22 residues, 1-22 (MKNFNLLVVSSILLVDLFPTNC), serve as a signal peptide directing secretion. The tract at residues 50-288 (AQVRQSASRG…AGAGQGQNNE (239 aa)) is disordered. Over residues 65–93 (NPKDEEGADKPKKKEEKKVEPKKPRENKL) the composition is skewed to basic and acidic residues. A required for the binding to heparan sulfate proteoglycans (HSPGs) on the surface of host hepatocytes region spans residues 81 to 89 (KKVEPKKPR). A region I; contains the proteolytic cleavage site region spans residues 92-96 (KLKQP). Residues 96–203 (PPAGDGAPEG…RAGGQPAAGG (108 aa)) are compositionally biased toward low complexity. Residues 97 to 102 (PAGDGA) form a 1-1; truncated repeat. Residues 97–191 (PAGDGAPEGD…AAPAGDGAPA (95 aa)) form an 11 X 9 AA tandem repeats of P-[AE]-G-D-G-A-P-A-[AG] region. A run of 13 repeats spans residues 103-111 (PEGDGAPAA), 112-120 (PAGDGAPAA), 121-129 (PAGDGAPAA), 130-138 (PAGDGAPAA), 139-147 (PAGDGAPAA), 148-156 (PAGDGAPAA), 157-165 (PAGDGAPAA), 166-174 (PAGDGAPAA), 175-183 (PAGDGAPAA), 184-191 (PAGDGAPA), 193-208 (NRAGGQPAAGGNQAGG), 209-224 (NRAGGQPAAGGNQAGG), and 225-240 (NRAGGQPAAGGNQAGG). The 6 X 16 AA approximate tandem repeats of N-R-A-G-G-Q-P-A-A-G-G-N-Q-A-G-G stretch occupies residues 193-268 (NRAGGQPAAG…GAQAGGANAG (76 aa)). Residues 228 to 251 (GGQPAAGGNQAGGQPAAGGNQAGA) show a composition bias toward low complexity. A 2-4; approximate; truncated repeat occupies 241-251 (QPAAGGNQAGA). One copy of the 2-5; approximate; truncated repeat lies at 252–260 (QAGGNQAGA). 2 stretches are compositionally biased toward gly residues: residues 252 to 266 (QAGGNQAGAQAGGAN) and 274 to 283 (EAGGNAGAGQ). One copy of the 2-6; approximate; truncated repeat lies at 261–268 (QAGGANAG). Residues 304–356 (KIRSTLGVEWSPCSVTCGKGVRMRRKVSAANKKPEELDVNDLETEVCTMDKCA) enclose the TSP type-1 domain. 2 disulfides stabilise this stretch: Cys-316-Cys-350 and Cys-320-Cys-355. O-linked (Fuc) threonine glycosylation is present at Thr-319. Cys-355 carries the GPI-anchor amidated cysteine lipid modification. Residues 356-378 (AGIFNVVSNSLRLVILLVLALFN) constitute a propeptide, removed in mature form.

This sequence belongs to the plasmodium circumsporozoite protein family. Post-translationally, during host cell invasion, proteolytically cleaved at the cell membrane in the region I by a papain-like cysteine protease of parasite origin. Cleavage is triggered by the sporozoite contact with highly sulfated heparan sulfate proteoglycans (HSPGs) present on the host hepatocyte cell surface. Cleavage exposes the TSP type-1 (TSR) domain and is required for productive invasion of host hepatocytes but not for adhesion to the host cell membrane. Cleavage is dispensable for sporozoite development in the oocyst, motility and for traversal of host and vector cells. O-glycosylated; maybe by POFUT2.

It is found in the cell membrane. The protein localises to the cytoplasm. Essential sporozoite protein. In the mosquito vector, required for sporozoite development in the oocyst, migration through the vector hemolymph and entry into the vector salivary glands. In the vertebrate host, required for sporozoite migration through the host dermis and infection of host hepatocytes. Binds to highly sulfated heparan sulfate proteoglycans (HSPGs) on the surface of host hepatocytes. Its function is as follows. In the vertebrate host, binds to highly sulfated heparan sulfate proteoglycans (HSPGs) on the surface of host hepatocytes and is required for sporozoite invasion of the host hepatocytes. The sequence is that of Circumsporozoite protein from Plasmodium cynomolgi (strain Berok).